Here is a 275-residue protein sequence, read N- to C-terminus: S-methyl-5'-thioadenosine phosphorylase (275 aa).

Residues Ser-20, 62 to 63 (RH), and 95 to 96 (SA) contribute to the phosphate site. Disulfide bonds link Cys-143–Cys-210, Cys-205–Cys-266, and Cys-264–Cys-267. Met-195 is a substrate binding site. Thr-196 contacts phosphate. Substrate is bound at residue 219–221 (DYD).

It belongs to the PNP/MTAP phosphorylase family. MTAP subfamily. As to quaternary structure, homohexamer. Dimer of a homotrimer.

It catalyses the reaction S-methyl-5'-thioadenosine + phosphate = 5-(methylsulfanyl)-alpha-D-ribose 1-phosphate + adenine. It functions in the pathway amino-acid biosynthesis; L-methionine biosynthesis via salvage pathway; S-methyl-5-thio-alpha-D-ribose 1-phosphate from S-methyl-5'-thioadenosine (phosphorylase route): step 1/1. In terms of biological role, catalyzes the reversible phosphorylation of S-methyl-5'-thioadenosine (MTA) to adenine and 5-methylthioribose-1-phosphate. Involved in the breakdown of MTA, a major by-product of polyamine biosynthesis. Responsible for the first step in the methionine salvage pathway after MTA has been generated from S-adenosylmethionine. Has broad substrate specificity with 6-aminopurine nucleosides as preferred substrates. In Aeropyrum pernix (strain ATCC 700893 / DSM 11879 / JCM 9820 / NBRC 100138 / K1), this protein is S-methyl-5'-thioadenosine phosphorylase.